The primary structure comprises 264 residues: Rhodanese-like domain-containing protein 4A, chloroplastic (264 aa).

The N-terminal 60 residues, 1–60 (MTSLPIILASSPLRNLTKPCSTSQIPKPIQNSTKQPPIHLLTKTNLSVTISQLIITSPVL), are a transit peptide targeting the chloroplast. The chain crosses the membrane as a helical span at residues 95 to 115 (FFVAGCTFTYLVVYPAVMFYL). One can recognise a Rhodanese domain in the interval 132–232 (NESDSQLLDI…ARGKNGWLAI (101 aa)).

The protein localises to the plastid. It is found in the chloroplast. Its subcellular location is the membrane. This chain is Rhodanese-like domain-containing protein 4A, chloroplastic (STR4A), found in Arabidopsis thaliana (Mouse-ear cress).